The chain runs to 519 residues: Cytosol aminopeptidase (519 aa).

A Phosphoserine modification is found at Ser-42. Lys-45 bears the N6-succinyllysine mark. A Phosphoserine modification is found at Ser-54. Lys-61 and Lys-103 each carry N6-succinyllysine. Phosphoserine occurs at positions 180 and 194. The Zn(2+) site is built by Leu-202 and Met-203. Lys-221 bears the N6-acetyllysine; alternate mark. N6-succinyllysine; alternate is present on Lys-221. The residue at position 238 (Ser-238) is a Phosphoserine. 2 residues coordinate Zn(2+): Lys-282 and Asp-287. Substrate contacts are provided by Lys-282, Asp-287, Ser-292, and Lys-294. Asp-287 provides a ligand contact to Mg(2+). The active site involves Lys-294. Residues Arg-303, Asp-305, Asp-364, and Glu-366 each contribute to the Zn(2+) site. The substrate site is built by Asp-305 and Asp-364. Mg(2+) contacts are provided by Asp-364 and Glu-366. Arg-368 is a catalytic residue. Lys-455 bears the N6-acetyllysine; alternate mark. An N6-succinyllysine; alternate modification is found at Lys-455. At Lys-476 the chain carries N6-succinyllysine. N6-acetyllysine; alternate is present on Lys-489. The residue at position 489 (Lys-489) is an N6-succinyllysine; alternate.

This sequence belongs to the peptidase M17 family. In terms of assembly, homohexamer. The cofactor is Zn(2+). Mn(2+) serves as cofactor.

It is found in the cytoplasm. The enzyme catalyses Release of an N-terminal amino acid, Xaa-|-Yaa-, in which Xaa is preferably Leu, but may be other amino acids including Pro although not Arg or Lys, and Yaa may be Pro. Amino acid amides and methyl esters are also readily hydrolyzed, but rates on arylamides are exceedingly low.. The catalysed reaction is an S-substituted L-cysteinylglycine + H2O = an S-substituted L-cysteine + glycine. It catalyses the reaction L-cysteinylglycine + H2O = L-cysteine + glycine. It carries out the reaction S-benzyl-L-cysteinylglycine + H2O = S-benzyl-L-cysteine + glycine. The enzyme catalyses Release of N-terminal proline from a peptide.. Its activity is regulated as follows. Bimane-S-cysteinylglycine-hydrolyzing activity is inhibited by o-phenanthroline or bestatin, and is activated by the addition of zinc chloride. Cytosolic metallopeptidase that catalyzes the removal of unsubstituted N-terminal hydrophobic amino acids from various peptides. The presence of Zn(2+) ions is essential for the peptidase activity, and the association with other cofactors can modulate the substrate spectificity of the enzyme. For instance, in the presence of Mn(2+), it displays a specific Cys-Gly hydrolyzing activity of Cys-Gly-S-conjugates. Involved in the metabolism of glutathione and in the degradation of glutathione S-conjugates, which may play a role in the control of the cell redox status. The chain is Cytosol aminopeptidase from Rattus norvegicus (Rat).